Reading from the N-terminus, the 347-residue chain is Probable E3 ubiquitin-protein ligase DTX3 (347 aa).

Residues 113–157 (EHPEMHRAGPPPLRAAPLLPPGARGLPPPPPPLPPPLPPRLREEA) form a disordered region. Residues 121-151 (GPPPLRAAPLLPPGARGLPPPPPPLPPPLPP) show a composition bias toward pro residues. The segment at 164 to 205 (CPICLGEIQNAKTLEKCRHSFCEGCITRALQVKKACPMCGRF) adopts an RING-type zinc-finger fold.

Belongs to the Deltex family. In terms of assembly, homodimer. May form a heterodimers with other members of the Deltex family. Interacts with NOTCH1.

Its subcellular location is the cytoplasm. It catalyses the reaction S-ubiquitinyl-[E2 ubiquitin-conjugating enzyme]-L-cysteine + [acceptor protein]-L-lysine = [E2 ubiquitin-conjugating enzyme]-L-cysteine + N(6)-ubiquitinyl-[acceptor protein]-L-lysine.. Its pathway is protein modification; protein ubiquitination. Regulator of Notch signaling, a signaling pathway involved in cell-cell communications that regulates a broad spectrum of cell-fate determinations. Probably acts both as a positive and negative regulator of Notch, depending on the developmental and cell context. Functions as an ubiquitin ligase protein in vitro, suggesting that it may regulate the Notch pathway via some ubiquitin ligase activity. In Homo sapiens (Human), this protein is Probable E3 ubiquitin-protein ligase DTX3 (DTX3).